The sequence spans 354 residues: Methylthioribose-1-phosphate isomerase (354 aa).

Asp-246 functions as the Proton donor in the catalytic mechanism.

This sequence belongs to the eIF-2B alpha/beta/delta subunits family. MtnA subfamily.

It localises to the cytoplasm. The protein resides in the nucleus. It carries out the reaction 5-(methylsulfanyl)-alpha-D-ribose 1-phosphate = 5-(methylsulfanyl)-D-ribulose 1-phosphate. Its pathway is amino-acid biosynthesis; L-methionine biosynthesis via salvage pathway; L-methionine from S-methyl-5-thio-alpha-D-ribose 1-phosphate: step 1/6. In terms of biological role, catalyzes the interconversion of methylthioribose-1-phosphate (MTR-1-P) into methylthioribulose-1-phosphate (MTRu-1-P). This Xenopus laevis (African clawed frog) protein is Methylthioribose-1-phosphate isomerase (mri1).